The sequence spans 389 residues: Zip homologous protein 3 (389 aa).

The RING-type zinc finger occupies 6 to 43 (CNKCFNRKPPDGFFISSCFHIFCTKCAKADLAVCLICK). Positions 123–164 (LAEATAWIQMAEKKLQASEEERVKAEREIEECQAKLKSMTNL) form a coiled coil. The interval 366–389 (ISSQPGYLAQRKPINGRSFIGPAD) is disordered.

As to quaternary structure, interacts with zhp-4; the interaction is required for their localization along paired chromosomes and stability, and for the formation of chiasma during meiotic recombination. Expressed througout the gonad (at protein level). Expressed in the germline.

It localises to the chromosome. Functionally, recruited co-dependently with zhp-4 to the synaptonemal complex between homologous chromosome pairs to regulate the formation and number of crossover events between homologs during meiotic recombination. In the early stages of pachytene, in complex with zhp-4, recruited by the zhp-1-zhp-2 heterodimer to designated crossover sites along the homolog pair to stabilize other pro-crossover factors such as rmh-1, msh-5 and cosa-1. This in turn facilitates crossover and promotes the formation of chiasma in each meiotic nucleus at the late pachytene stage of meiosis. Plays a role in the segregation of homologous chromosomes following the completion of crossovers. Together with him-14 and msh-5 plays a role in the activation of DNA damage-dependent apoptosis at the DNA damage checkpoint in pachytene cells. The polypeptide is Zip homologous protein 3 (Caenorhabditis elegans).